The sequence spans 126 residues: RuBisCO chaperone RbcX (126 aa).

It belongs to the RbcX family. In terms of assembly, homodimer. Interacts with the exposed C-terminal peptide of RbcL via its central cleft, contacts a second RbcL monomer via its peripheral polar surface.

Its subcellular location is the carboxysome. The protein resides in the cytoplasm. Functionally, an RbcL-specific chaperone. Required for assembly of the RbcL8 core. The central cleft of the RbcX homodimer (RbcX2) binds the C-terminus of a RbcL monomer, stabilizing the C-terminus and probably preventing its reassociation with chaperonin GroEL-ES. At the same time the peripheral region of RbcX2 binds a second RbcL monomer, bridging the RbcL homodimers in the correct orientation. The RbcX2(2)-bound RbcL dimers then assemble into the RbcL8 core (RbcL8-(RbcX2)8). RbcS binding triggers the release of RbcX2. This Thermosynechococcus vestitus (strain NIES-2133 / IAM M-273 / BP-1) protein is RuBisCO chaperone RbcX.